Reading from the N-terminus, the 261-residue chain is (S)-ureidoglycine aminohydrolase (261 aa).

The region spanning 184–230 (LSFAPGASHGYIETHVQEHGAYILSGQGVYNLDNNWIPVKKGDYIFM) is the Cupin type-2 domain. Positions 196, 198, 202, and 236 each coordinate Mn(2+). A substrate-binding site is contributed by E196. Substrate-binding residues include Q236, Y249, and K253.

Belongs to the UGHY family. Monomer. Mn(2+) serves as cofactor.

It localises to the cytoplasm. It carries out the reaction (S)-2-ureidoglycine + H2O = (S)-ureidoglycolate + NH4(+). Functionally, involved in the anaerobic nitrogen utilization via the assimilation of allantoin. Catalyzes the second stereospecific hydrolysis reaction (deamination) of the allantoin degradation pathway, producing S-ureidoglycolate and ammonia from S-ureidoglycine. The protein is (S)-ureidoglycine aminohydrolase (allE) of Escherichia coli (strain K12).